A 340-amino-acid polypeptide reads, in one-letter code: Citramalyl-CoA lyase, mitochondrial (340 aa).

The N-terminal 22 residues, 1 to 22 (MALRLLRRAARGAAAAALLRLK), are a transit peptide targeting the mitochondrion. Tyrosine 50, lysine 57, and lysine 61 together coordinate substrate. 2 positions are modified to N6-acetyllysine: lysine 57 and lysine 61. 2 positions are modified to N6-acetyllysine; alternate: lysine 82 and lysine 92. 2 positions are modified to N6-succinyllysine; alternate: lysine 82 and lysine 92. Arginine 107 provides a ligand contact to substrate. Mg(2+)-binding residues include glutamate 171 and aspartate 206. Residue 272 to 273 (IH) participates in substrate binding. Lysine 309 bears the N6-succinyllysine mark. The active site involves aspartate 320.

Belongs to the HpcH/HpaI aldolase family. Citrate lyase beta subunit-like subfamily. In terms of assembly, homotrimer. Mg(2+) is required as a cofactor.

Its subcellular location is the mitochondrion. It carries out the reaction glyoxylate + acetyl-CoA + H2O = (S)-malate + CoA + H(+). The enzyme catalyses propanoyl-CoA + glyoxylate + H2O = 3-methylmalate + CoA + H(+). The catalysed reaction is (3S)-citramalyl-CoA = pyruvate + acetyl-CoA. It catalyses the reaction (S)-malyl-CoA + H2O = (S)-malate + CoA + H(+). Its function is as follows. Mitochondrial citramalyl-CoA lyase indirectly involved in the vitamin B12 metabolism. Converts citramalyl-CoA into acetyl-CoA and pyruvate in the C5-dicarboxylate catabolism pathway. The C5-dicarboxylate catabolism pathway is required to detoxify itaconate, a vitamin B12-poisoning metabolite. Also acts as a malate synthase in vitro, converting glyoxylate and acetyl-CoA to malate. Also displays malyl-CoA thioesterase activity. Also acts as a beta-methylmalate synthase in vitro, by mediating conversion of glyoxylate and propionyl-CoA to beta-methylmalate. Also has very weak citramalate synthase activity in vitro. This chain is Citramalyl-CoA lyase, mitochondrial, found in Homo sapiens (Human).